A 340-amino-acid chain; its full sequence is Ketol-acid reductoisomerase (NADP(+)) (340 aa).

Residues 1–182 (MRVYYDRDCD…GGGRSGIIET (182 aa)) form the KARI N-terminal Rossmann domain. NADP(+) is bound by residues 24 to 27 (YGSQ), R48, S51, S53, and 83 to 86 (DELQ). H108 is a catalytic residue. NADP(+) is bound at residue G134. Positions 183-329 (NFRQECETDL…EKLRGMMPWI (147 aa)) constitute a KARI C-terminal knotted domain. 4 residues coordinate Mg(2+): D191, E195, E227, and E231. S252 serves as a coordination point for substrate.

The protein belongs to the ketol-acid reductoisomerase family. Requires Mg(2+) as cofactor.

The enzyme catalyses (2R)-2,3-dihydroxy-3-methylbutanoate + NADP(+) = (2S)-2-acetolactate + NADPH + H(+). It carries out the reaction (2R,3R)-2,3-dihydroxy-3-methylpentanoate + NADP(+) = (S)-2-ethyl-2-hydroxy-3-oxobutanoate + NADPH + H(+). Its pathway is amino-acid biosynthesis; L-isoleucine biosynthesis; L-isoleucine from 2-oxobutanoate: step 2/4. It participates in amino-acid biosynthesis; L-valine biosynthesis; L-valine from pyruvate: step 2/4. Its function is as follows. Involved in the biosynthesis of branched-chain amino acids (BCAA). Catalyzes an alkyl-migration followed by a ketol-acid reduction of (S)-2-acetolactate (S2AL) to yield (R)-2,3-dihydroxy-isovalerate. In the isomerase reaction, S2AL is rearranged via a Mg-dependent methyl migration to produce 3-hydroxy-3-methyl-2-ketobutyrate (HMKB). In the reductase reaction, this 2-ketoacid undergoes a metal-dependent reduction by NADPH to yield (R)-2,3-dihydroxy-isovalerate. This Cereibacter sphaeroides (strain ATCC 17025 / ATH 2.4.3) (Rhodobacter sphaeroides) protein is Ketol-acid reductoisomerase (NADP(+)).